Consider the following 577-residue polypeptide: Arginine--tRNA ligase (577 aa).

The 'HIGH' region signature appears at 122–132 (PNVAKEMHVGH).

It belongs to the class-I aminoacyl-tRNA synthetase family. In terms of assembly, monomer.

The protein localises to the cytoplasm. The enzyme catalyses tRNA(Arg) + L-arginine + ATP = L-arginyl-tRNA(Arg) + AMP + diphosphate. The protein is Arginine--tRNA ligase of Vibrio vulnificus (strain YJ016).